Reading from the N-terminus, the 335-residue chain is MPSIILYCSWNQDRGFLSIGSENGYQVYRSNPFTLCFSKKANGASICEMLYESSLLAFVNISPESTRLLKLVDIKRDIVLCRIFYPSPVLSVRFTWNRLVVLIKGSIYVYNLKNMELINTLNTSKGNVIAFAVHENYVAYNSPTNPGDIYLASLDTAIPVTLIHCHSSAVQVVDFHPRGHLIATASAKGTVIRVITTSDGELVTELRRGYIPASIVSISFHPVEPFLACASENGTIHVFKISKQPSDPNSSPTSSVTVSSSWSKYLTSNVAKVWDTRKEFATAKIPEASFYGKIIFSSSGPHIQVASYSGHYYRFAVNLKNGGNCALLERYIFDD.

WD repeat units lie at residues 165-205 (CHSS…LVTE) and 210-249 (YIPA…SDPN).

Belongs to the WD repeat PROPPIN family.

It is found in the cytoplasm. It localises to the golgi apparatus. The protein resides in the golgi stack membrane. Its subcellular location is the vacuole membrane. The protein localises to the preautophagosomal structure membrane. In terms of biological role, required for cytoplasm to vacuole transport (Cvt) vesicles formation and autophagy. Has a role in sporulation. The sequence is that of Autophagy-related protein 21 (mug179) from Schizosaccharomyces pombe (strain 972 / ATCC 24843) (Fission yeast).